Consider the following 250-residue polypeptide: Phosphatidylglycerol--prolipoprotein diacylglyceryl transferase (250 aa).

The next 4 helical transmembrane spans lie at 11–31 (LAIR…LLLA), 49–69 (FLIA…IFEF), 84–104 (QGGL…YIYL), and 109–129 (ESFF…QAIG). R130 is a binding site for a 1,2-diacyl-sn-glycero-3-phospho-(1'-sn-glycerol). Transmembrane regions (helical) follow at residues 169 to 189 (PTFL…VYLL), 196 to 216 (GIVF…IEGL), and 228 to 248 (VAQL…YNII).

The protein belongs to the Lgt family.

Its subcellular location is the cell membrane. The catalysed reaction is L-cysteinyl-[prolipoprotein] + a 1,2-diacyl-sn-glycero-3-phospho-(1'-sn-glycerol) = an S-1,2-diacyl-sn-glyceryl-L-cysteinyl-[prolipoprotein] + sn-glycerol 1-phosphate + H(+). It participates in protein modification; lipoprotein biosynthesis (diacylglyceryl transfer). Functionally, catalyzes the transfer of the diacylglyceryl group from phosphatidylglycerol to the sulfhydryl group of the N-terminal cysteine of a prolipoprotein, the first step in the formation of mature lipoproteins. The sequence is that of Phosphatidylglycerol--prolipoprotein diacylglyceryl transferase from Clostridium botulinum (strain 657 / Type Ba4).